A 240-amino-acid polypeptide reads, in one-letter code: MLTLGVNIDHVATIRQARRTVEPDPVAAAVLAELGGANGITAHLREDRRHMQDRDIRILRETVRTHLNLEMAATEEMVAIALDIKPDYVTLVPEKREEVTTEGGLDIAGSLEKLKNVVDRLQSANIPVSLFIDADEAQIKASAETQAKFIELHTGKYADAPNAEIRQKELESLKLGCEQALSLGLRVNAGHGLTYINVYPVACLPGMEELNIGHTIVSRAVLVGMERAVREMKLAMRGEL.

N7 contacts 3-amino-2-oxopropyl phosphate. A 1-deoxy-D-xylulose 5-phosphate-binding site is contributed by D9 to H10. Position 18 (R18) interacts with 3-amino-2-oxopropyl phosphate. H43 (proton acceptor) is an active-site residue. Residues R45 and H50 each contribute to the 1-deoxy-D-xylulose 5-phosphate site. E70 serves as the catalytic Proton acceptor. T100 serves as a coordination point for 1-deoxy-D-xylulose 5-phosphate. H191 acts as the Proton donor in catalysis. Residues G192 and G213–H214 contribute to the 3-amino-2-oxopropyl phosphate site.

Belongs to the PNP synthase family. In terms of assembly, homooctamer; tetramer of dimers.

The protein localises to the cytoplasm. It carries out the reaction 3-amino-2-oxopropyl phosphate + 1-deoxy-D-xylulose 5-phosphate = pyridoxine 5'-phosphate + phosphate + 2 H2O + H(+). It functions in the pathway cofactor biosynthesis; pyridoxine 5'-phosphate biosynthesis; pyridoxine 5'-phosphate from D-erythrose 4-phosphate: step 5/5. Functionally, catalyzes the complicated ring closure reaction between the two acyclic compounds 1-deoxy-D-xylulose-5-phosphate (DXP) and 3-amino-2-oxopropyl phosphate (1-amino-acetone-3-phosphate or AAP) to form pyridoxine 5'-phosphate (PNP) and inorganic phosphate. The polypeptide is Pyridoxine 5'-phosphate synthase (Crocosphaera subtropica (strain ATCC 51142 / BH68) (Cyanothece sp. (strain ATCC 51142))).